A 252-amino-acid polypeptide reads, in one-letter code: UPF0246 protein LJ_0535 (252 aa).

This sequence belongs to the UPF0246 family.

The chain is UPF0246 protein LJ_0535 from Lactobacillus johnsonii (strain CNCM I-12250 / La1 / NCC 533).